The sequence spans 491 residues: Anthranilate synthase component 1 (491 aa).

Residues Ser49 and 271–273 (PYL) contribute to the L-tryptophan site. 306–307 (GT) provides a ligand contact to chorismate. Glu333 contributes to the Mg(2+) binding site. Chorismate-binding positions include Tyr421, Arg441, 455 to 457 (GAG), and Gly457. Glu470 is a Mg(2+) binding site.

Belongs to the anthranilate synthase component I family. In terms of assembly, heterotetramer consisting of two non-identical subunits: a beta subunit (TrpG) and a large alpha subunit (TrpE). Mg(2+) serves as cofactor.

It catalyses the reaction chorismate + L-glutamine = anthranilate + pyruvate + L-glutamate + H(+). It functions in the pathway amino-acid biosynthesis; L-tryptophan biosynthesis; L-tryptophan from chorismate: step 1/5. Feedback inhibited by tryptophan. Its function is as follows. Part of a heterotetrameric complex that catalyzes the two-step biosynthesis of anthranilate, an intermediate in the biosynthesis of L-tryptophan. In the first step, the glutamine-binding beta subunit (TrpG) of anthranilate synthase (AS) provides the glutamine amidotransferase activity which generates ammonia as a substrate that, along with chorismate, is used in the second step, catalyzed by the large alpha subunit of AS (TrpE) to produce anthranilate. In the absence of TrpG, TrpE can synthesize anthranilate directly from chorismate and high concentrations of ammonia. In Neisseria meningitidis serogroup C / serotype 2a (strain ATCC 700532 / DSM 15464 / FAM18), this protein is Anthranilate synthase component 1 (trpE).